The primary structure comprises 149 residues: Arginine repressor (149 aa).

This sequence belongs to the ArgR family.

It localises to the cytoplasm. Its pathway is amino-acid biosynthesis; L-arginine biosynthesis [regulation]. Functionally, regulates arginine biosynthesis genes. The polypeptide is Arginine repressor (Geobacillus thermodenitrificans (strain NG80-2)).